The following is a 365-amino-acid chain: Chaperone protein DnaJ (365 aa).

Residues 4–70 (DYYKILGVDR…EKRRIYDQTG (67 aa)) enclose the J domain. The segment at 139–220 (GTEKRIKFRR…CNGTGTIVVD (82 aa)) adopts a CR-type zinc-finger fold. Residues C152, C155, C168, C171, C194, C197, C208, and C211 each coordinate Zn(2+). CXXCXGXG motif repeat units follow at residues 152 to 159 (CPDCKGTG), 168 to 175 (CPTCHGTG), 194 to 201 (CNTCGGKG), and 208 to 215 (CPRCNGTG).

It belongs to the DnaJ family. Homodimer. The cofactor is Zn(2+).

Its subcellular location is the cytoplasm. In terms of biological role, participates actively in the response to hyperosmotic and heat shock by preventing the aggregation of stress-denatured proteins and by disaggregating proteins, also in an autonomous, DnaK-independent fashion. Unfolded proteins bind initially to DnaJ; upon interaction with the DnaJ-bound protein, DnaK hydrolyzes its bound ATP, resulting in the formation of a stable complex. GrpE releases ADP from DnaK; ATP binding to DnaK triggers the release of the substrate protein, thus completing the reaction cycle. Several rounds of ATP-dependent interactions between DnaJ, DnaK and GrpE are required for fully efficient folding. Also involved, together with DnaK and GrpE, in the DNA replication of plasmids through activation of initiation proteins. In Thermoplasma volcanium (strain ATCC 51530 / DSM 4299 / JCM 9571 / NBRC 15438 / GSS1), this protein is Chaperone protein DnaJ.